The chain runs to 679 residues: Methionine--tRNA ligase (679 aa).

Positions 14–24 (PYANGSIHLGH) match the 'HIGH' region motif. 4 residues coordinate Zn(2+): Cys145, Cys148, Cys158, and Cys161. Positions 331 to 335 (KMSKS) match the 'KMSKS' region motif. ATP is bound at residue Lys334. Residues 577 to 679 (AFAAVDLRIA…SGAKPGQRVK (103 aa)) enclose the tRNA-binding domain.

It belongs to the class-I aminoacyl-tRNA synthetase family. MetG type 1 subfamily. As to quaternary structure, homodimer. Zn(2+) serves as cofactor.

The protein localises to the cytoplasm. The catalysed reaction is tRNA(Met) + L-methionine + ATP = L-methionyl-tRNA(Met) + AMP + diphosphate. In terms of biological role, is required not only for elongation of protein synthesis but also for the initiation of all mRNA translation through initiator tRNA(fMet) aminoacylation. In Pseudomonas paraeruginosa (strain DSM 24068 / PA7) (Pseudomonas aeruginosa (strain PA7)), this protein is Methionine--tRNA ligase.